A 174-amino-acid chain; its full sequence is Transcriptional repressor NrdR (174 aa).

A zinc finger lies at cysteine 3 to cysteine 34. One can recognise an ATP-cone domain in the interval proline 49 to aspartate 139.

It belongs to the NrdR family. Requires Zn(2+) as cofactor.

Negatively regulates transcription of bacterial ribonucleotide reductase nrd genes and operons by binding to NrdR-boxes. The protein is Transcriptional repressor NrdR of Xanthomonas campestris pv. campestris (strain 8004).